The following is a 209-amino-acid chain: Chaperone protein TorD (209 aa).

The protein belongs to the TorD/DmsD family. TorD subfamily.

It is found in the cytoplasm. Functionally, involved in the biogenesis of TorA. Acts on TorA before the insertion of the molybdenum cofactor and, as a result, probably favors a conformation of the apoenzyme that is competent for acquiring the cofactor. In Shewanella baltica (strain OS185), this protein is Chaperone protein TorD.